The sequence spans 876 residues: Alanine--tRNA ligase (876 aa).

The Zn(2+) site is built by H562, H566, C666, and H670.

Belongs to the class-II aminoacyl-tRNA synthetase family. Requires Zn(2+) as cofactor.

The protein localises to the cytoplasm. It catalyses the reaction tRNA(Ala) + L-alanine + ATP = L-alanyl-tRNA(Ala) + AMP + diphosphate. Functionally, catalyzes the attachment of alanine to tRNA(Ala) in a two-step reaction: alanine is first activated by ATP to form Ala-AMP and then transferred to the acceptor end of tRNA(Ala). Also edits incorrectly charged Ser-tRNA(Ala) and Gly-tRNA(Ala) via its editing domain. The sequence is that of Alanine--tRNA ligase from Hahella chejuensis (strain KCTC 2396).